The following is a 201-amino-acid chain: Large ribosomal subunit protein bL25 (201 aa).

It belongs to the bacterial ribosomal protein bL25 family. CTC subfamily. Part of the 50S ribosomal subunit; part of the 5S rRNA/L5/L18/L25 subcomplex. Contacts the 5S rRNA. Binds to the 5S rRNA independently of L5 and L18.

Functionally, this is one of the proteins that binds to the 5S RNA in the ribosome where it forms part of the central protuberance. The protein is Large ribosomal subunit protein bL25 of Ectopseudomonas mendocina (strain ymp) (Pseudomonas mendocina).